Here is a 196-residue protein sequence, read N- to C-terminus: Heat shock protein beta-8 (196 aa).

Residues 1–34 (MADGQMPFPCHYTSRRRRDPFRDSPLSSRLLDDG) are disordered. Low complexity predominate over residues 23–34 (DSPLSSRLLDDG). 2 positions are modified to phosphoserine: Ser-24 and Ser-57. Thr-63 bears the Phosphothreonine mark. Asymmetric dimethylarginine is present on residues Arg-71 and Arg-78. A sHSP domain is found at 74-185 (TAMTRFGVPA…PFGESSFNNE (112 aa)). Residue Ser-87 is modified to Phosphoserine. Residues 176 to 196 (PFGESSFNNELPQDGQEVTCT) are disordered. The span at 178-196 (GESSFNNELPQDGQEVTCT) shows a compositional bias: polar residues.

Belongs to the small heat shock protein (HSP20) family. In terms of assembly, monomer. Forms a ternary complex with BAG3 and HSPA1A. Component of the chaperone-assisted selective autophagy (CASA) complex consisting of BAG3, HSPA8/HSC70, HSPB8 and STUB1/CHIP. Interacts with HSPB1. Interacts with DNAJB6. Interacts with BAG3. In terms of processing, phosphorylated.

It is found in the cytoplasm. It localises to the nucleus. Its function is as follows. Involved in the chaperone-assisted selective autophagy (CASA), a crucial process for protein quality control, particularly in mechanical strained cells and tissues such as muscle. Displays temperature-dependent chaperone activity. The protein is Heat shock protein beta-8 (HSPB8) of Bos taurus (Bovine).